The sequence spans 329 residues: DNA-directed RNA polymerase subunit alpha (329 aa).

The segment at 1–234 (MQGSVTEFLK…EQLDAFVELR (234 aa)) is alpha N-terminal domain (alpha-NTD). The segment at 248–329 (FDPILLRPVD…WPPASLADDL (82 aa)) is alpha C-terminal domain (alpha-CTD).

Belongs to the RNA polymerase alpha chain family. In terms of assembly, homodimer. The RNAP catalytic core consists of 2 alpha, 1 beta, 1 beta' and 1 omega subunit. When a sigma factor is associated with the core the holoenzyme is formed, which can initiate transcription.

The catalysed reaction is RNA(n) + a ribonucleoside 5'-triphosphate = RNA(n+1) + diphosphate. DNA-dependent RNA polymerase catalyzes the transcription of DNA into RNA using the four ribonucleoside triphosphates as substrates. This is DNA-directed RNA polymerase subunit alpha from Shewanella baltica (strain OS155 / ATCC BAA-1091).